Here is a 776-residue protein sequence, read N- to C-terminus: MSSNRSQNPHGLKQIGLDQIWDDLRAGIQQVYTRQSMAKSRYMELYTHVYNYCTSVHQSNQARGAGVPPSKSKKGQTPGGAQFVGLELYKRLKEFLKNYLTNLLKDGEDLMDESVLKFYTQQWEDYRFSSKVLNGICAYLNRHWVRRECDEGRKGIYEIYSLALVTWRDCLFRPLNKQVTNAVLKLIEKERNGETINTRLISGVVQSYVELGLNEDDAFAKGPTLTVYKESFESQFLADTERFYTRESTEFLQQNPVTEYMKKAEARLLEEQRRVQVYLHESTQDELARKCEQVLIEKHLEIFHTEFQNLLDADKNEDLGRMYNLVSRIQDGLGELKKLLETHIHNQGLAAIEKCGEAALNDPKMYVQTVLDVHKKYNALVMSAFNNDAGFVAALDKACGRFINNNAVTKMAQSSSKSPELLARYCDSLLKKSSKNPEEAELEDTLNQVMVVFKYIEDKDVFQKFYAKMLAKRLVHQNSASDDAEASMISKLKQACGFEYTSKLQRMFQDIGVSKDLNEQFKKHLTNSEPLDLDFSIQVLSSGSWPFQQSCTFALPSELERSYQRFTAFYASRHSGRKLTWLYQLSKGELVTNCFKNRYTLQASTFQMAILLQYNTEDAYTVQQLTDSTQIKMDILAQVLQILLKSKLLVLEDENANVDEVELKPDTLIKLYLGYKNKKLRVNINVPMKTEQKQEQETTHKNIEEDRKLLIQAAIVRIMKMRKVLKHQQLLGEVLTQLSSRFKPRVPVIKKCIDILIEKEYLERVDGEKDTYSYLA.

The residue at position 63 (Arg-63) is an Omega-N-methylarginine. The region spanning 706–766 is the Cullin neddylation domain; that stretch reads DRKLLIQAAI…IEKEYLERVD (61 aa). Residue Lys-720 forms a Glycyl lysine isopeptide (Lys-Gly) (interchain with G-Cter in NEDD8) linkage.

It belongs to the cullin family. Component of multiple Cul1-RING E3 ubiquitin-protein ligase complexes commonly known as SCF (SKP1-CUL1-F-box) complexes, consisting of CUL1, SKP1, RBX1 and a variable F-box domain-containing protein as substrate-specific subunit. Component of the SCF(FBXW11) complex containing FBXW11. Component of the SCF(SKP2) complex containing SKP2, in which it interacts directly with SKP1, SKP2 and RBX1. Component of the SCF(FBXW2) complex containing FBXW2. Component of the SCF(FBXO32) complex containing FBXO32. Component of the probable SCF(FBXO7) complex containing FBXO7. Component of the SCF(FBXO10) complex containing FBXO10. Component of the SCF(FBXO11) complex containing FBXO11. Component of the SCF(FBXO25) complex containing FBXO25. Component of the SCF(FBXO33) complex containing FBXO33. Component of the probable SCF(FBXO4) complex containing FBXO4. Component of the SCF(FBXO44) complex, composed of SKP1, CUL1 and FBXO44. Component of the SCF(BTRC) complex, composed of SKP1, CUL1 and BTRC. This complex binds phosphorylated NFKBIA. Part of a SCF complex consisting of CUL1, RBX1, SKP1 and FBXO2. Component of a SCF(SKP2)-like complex containing CUL1, SKP1, TRIM21 and SKP2. Component of the SCF(FBXO17) complex, composed of SKP1, CUL1 and FBXO17. Component of the SCF(FBXO27) complex, composed of SKP1, CUL1 and FBXO27. Component of the SCF(CCNF) complex consisting of CUL1, RBX1, SKP1 and CCNF. Interacts with CCNF. Component of the SCF(FBXL3) complex composed of CUL1, SKP1, RBX1 and FBXL3. Component of the SCF(FBXL21) complex composed of CUL1, SKP1, RBX1 and FBXL21. Component of the SCF(FBXO9) composed of CUL1, SKP1, RBX1 and FBXO9. Component of the SCF(FBXW7) composed of CUL1, SKP1, RBX1 and FBXW7. Component of the SCF(FBXO31) complex composed of CUL1, SKP1, RBX1 and FBXO31. Interacts with CHEK2; mediates CHEK2 ubiquitination and regulates its function. Part of a complex with TIP120A/CAND1 and RBX1. The unneddylated form interacts with TIP120A/CAND1 and the interaction mediates the exchange of the F-box substrate-specific subunit. Can self-associate. Interacts with FBXW8. Interacts with RNF7. Interacts with TRIM21. Interacts with COPS2. Interacts with DCUN1D1 and UBE2M. Interacts with DCUN1D3. Interacts with DCUN1D4. Identified in a complex with RBX1 and GLMN. Interacts with CEP68 as part of the SCF(FBXW11) complex; the interaction is probably mediated by FBXW11 and the complex also contains CDK5RAP2 and PCNT. Interacts (when neddylated) with ARIH1; leading to activate the E3 ligase activity of ARIH1. Interacts with COPS9. Interacts with UBXN1. Interacts with KAT7, probably as part of an SCF complex; the interaction mediates KAT7 ubiquitination. Interacts with NOTCH2. Part of a complex that contains DCUN1D5, CUL1 and RBX1; this interaction is bridged by CUL1. Interacts (unneddylated form) with DCUN1D1, DCUN1D2, DCUN1D3, DCUN1D4 and DCUN1D5; these interactions promote the cullin neddylation. Interacts (via the C-terminal domain) with CUL7; the interaction seems to be mediated by FBXW8; it is likely specific to FBXW8, but not other F-box proteins. Interacts with UBR2, as part of SCF(BTRC) complex; the interaction mediates 'Lys-48'-linked ubiquitination of UBR2 and is regulated by DUSP22 in the T-cell receptor signaling pathway. As to quaternary structure, (Microbial infection) Interacts with murine cytomegalovirus M48. In terms of processing, neddylated; which enhances the ubiquitination activity of SCF. Neddylation prevents binding of the inhibitor CAND1. Neddylation leads to structural rearrangment in the complex that allows interaction between the E2 ubiquitin-conjugating enzyme and the acceptor ubiquitin. Deneddylated via its interaction with the COP9 signalosome (CSN) complex. Post-translationally, (Microbial infection) Deneddylated by murine cytomegalovirus M48 leading to a S-phase-like environment that is required for efficient replication of the viral genome. In terms of tissue distribution, embryo fibroblasts and embryo preadipocytes.

Its pathway is protein modification; protein ubiquitination. Its function is as follows. Core component of multiple cullin-RING-based SCF (SKP1-CUL1-F-box protein) E3 ubiquitin-protein ligase complexes, which mediate the ubiquitination of proteins involved in cell cycle progression, signal transduction and transcription. SCF complexes and ARIH1 collaborate in tandem to mediate ubiquitination of target proteins. In the SCF complex, serves as a rigid scaffold that organizes the SKP1-F-box protein and RBX1 subunits. May contribute to catalysis through positioning of the substrate and the ubiquitin-conjugating enzyme. The E3 ubiquitin-protein ligase activity of the complex is dependent on the neddylation of the cullin subunit and exchange of the substrate recognition component is mediated by TIP120A/CAND1. The functional specificity of the SCF complex depends on the F-box protein as substrate recognition component. SCF(BTRC) and SCF(FBXW11) direct ubiquitination of CTNNB1 and participate in Wnt signaling. SCF(FBXW11) directs ubiquitination of phosphorylated NFKBIA. SCF(BTRC) directs ubiquitination of NFKBIB, NFKBIE, ATF4, SMAD3, SMAD4, CDC25A, FBXO5 and probably NFKB2. SCF(BTRC) and/or SCF(FBXW11) direct ubiquitination of CEP68. SCF(SKP2) directs ubiquitination of phosphorylated CDKN1B/p27kip and is involved in regulation of G1/S transition. SCF(SKP2) directs ubiquitination of ORC1, CDT1, RBL2, ELF4, CDKN1A, RAG2, FOXO1A, and probably MYC and TAL1. SCF(FBXW7) directs ubiquitination of cyclin E, NOTCH1 released notch intracellular domain (NICD), and probably PSEN1. SCF(FBXW2) directs ubiquitination of GCM1. SCF(FBXO32) directs ubiquitination of MYOD1. SCF(FBXO7) directs ubiquitination of BIRC2 and DLGAP5. SCF(FBXO33) directs ubiquitination of YBX1. SCF(FBXO1) directs ubiquitination of BCL6 and DTL but does not seem to direct ubiquitination of TP53. SCF(BTRC) mediates the ubiquitination of NFKBIA at 'Lys-21' and 'Lys-22'; the degradation frees the associated NFKB1-RELA dimer to translocate into the nucleus and to activate transcription. SCF(CCNF) directs ubiquitination of CCP110. SCF(FBXL3) and SCF(FBXL21) direct ubiquitination of CRY1 and CRY2. SCF(FBXO9) directs ubiquitination of TTI1 and TELO2. SCF(FBXO10) directs ubiquitination of BCL2. Neddylated CUL1-RBX1 ubiquitinates p53/TP53 recruited by Cul7-RING(FBXW8) complex. SCF(BTRC) directs 'Lys-48'-linked ubiquitination of UBR2 in the T-cell receptor signaling pathway. The SCF(FBXO31) protein ligase complex specifically mediates the ubiquitination of proteins amidated at their C-terminus in response to oxidative stress. The chain is Cullin-1 (Cul1) from Mus musculus (Mouse).